Reading from the N-terminus, the 1383-residue chain is DNA-directed RNA polymerase subunit beta (1383 aa).

Belongs to the RNA polymerase beta chain family. The RNAP catalytic core consists of 2 alpha, 1 beta, 1 beta' and 1 omega subunit. When a sigma factor is associated with the core the holoenzyme is formed, which can initiate transcription.

It carries out the reaction RNA(n) + a ribonucleoside 5'-triphosphate = RNA(n+1) + diphosphate. In terms of biological role, DNA-dependent RNA polymerase catalyzes the transcription of DNA into RNA using the four ribonucleoside triphosphates as substrates. This is DNA-directed RNA polymerase subunit beta from Xanthomonas oryzae pv. oryzae (strain MAFF 311018).